The chain runs to 727 residues: Ankyrin repeat domain-containing protein 6 (727 aa).

ANK repeat units follow at residues 9-38 (ALSE…RVAV), 41-70 (HGRT…DLDV), 74-103 (GDQT…ALDR), 107-136 (DGNT…NVLA), 140-169 (AGNT…RADL), 173-202 (AGDT…SVHE), 206-235 (AGDT…DTTI), and 239-268 (AGQT…VLRF). A disordered region spans residues 277–386 (KRERLKEERR…HRCSSPPPPH (110 aa)). Residues 280 to 296 (RLKEERRAQSVPRDEVA) are compositionally biased toward basic and acidic residues. The span at 298–312 (SKGSVSAGDTPSSEQ) shows a compositional bias: polar residues. The span at 314–324 (VARKEEAREEF) shows a compositional bias: basic and acidic residues. Residues 363-379 (KNLHAHNHPKKRNRHRC) show a composition bias toward basic residues. Residues 417–446 (LINKLENQLEATVEEIKAELGSVQDKMNTK) are a coiled coil. Positions 548–557 (PAAASDSSPP) are enriched in low complexity. Disordered stretches follow at residues 548–586 (PAAA…CTGS) and 601–657 (NEAA…TGPH). Positions 566–584 (LNSTATQRLQQELSSSDCT) are enriched in polar residues. Positions 622–633 (KSGKSGPTRHRA) are enriched in basic residues. A coiled-coil region spans residues 682 to 727 (WYERKIEEARSQANQKAQQDKATLKEHIKSLEEELAKLRTRVQKEN).

As to quaternary structure, interacts with AXN1, AXN2 and CSNK1E/CKI-epsilon.

In terms of biological role, recruits CKI-epsilon to the beta-catenin degradation complex that consists of AXN1 or AXN2 and GSK3-beta and allows efficient phosphorylation of beta-catenin, thereby inhibiting beta-catenin/Tcf signals. This chain is Ankyrin repeat domain-containing protein 6 (ANKRD6), found in Homo sapiens (Human).